Reading from the N-terminus, the 406-residue chain is Multifunctional CCA protein (406 aa).

Residues glycine 8 and arginine 11 each coordinate ATP. CTP-binding residues include glycine 8 and arginine 11. Aspartate 21 and aspartate 23 together coordinate Mg(2+). Positions 91, 138, and 141 each coordinate ATP. Arginine 91, arginine 138, and arginine 141 together coordinate CTP. One can recognise an HD domain in the interval threonine 229–leucine 331.

This sequence belongs to the tRNA nucleotidyltransferase/poly(A) polymerase family. Bacterial CCA-adding enzyme type 1 subfamily. In terms of assembly, monomer. Can also form homodimers and oligomers. Mg(2+) is required as a cofactor. The cofactor is Ni(2+).

It catalyses the reaction a tRNA precursor + 2 CTP + ATP = a tRNA with a 3' CCA end + 3 diphosphate. The catalysed reaction is a tRNA with a 3' CCA end + 2 CTP + ATP = a tRNA with a 3' CCACCA end + 3 diphosphate. In terms of biological role, catalyzes the addition and repair of the essential 3'-terminal CCA sequence in tRNAs without using a nucleic acid template. Adds these three nucleotides in the order of C, C, and A to the tRNA nucleotide-73, using CTP and ATP as substrates and producing inorganic pyrophosphate. tRNA 3'-terminal CCA addition is required both for tRNA processing and repair. Also involved in tRNA surveillance by mediating tandem CCA addition to generate a CCACCA at the 3' terminus of unstable tRNAs. While stable tRNAs receive only 3'-terminal CCA, unstable tRNAs are marked with CCACCA and rapidly degraded. The sequence is that of Multifunctional CCA protein from Stenotrophomonas maltophilia (strain K279a).